A 657-amino-acid chain; its full sequence is tRNA 5-methylaminomethyl-2-thiouridine biosynthesis bifunctional protein MnmC (657 aa).

The tract at residues 1-233 (MPRALEPAEP…KWQMTVASFR (233 aa)) is tRNA (mnm(5)s(2)U34)-methyltransferase. The segment at 257 to 657 (IGAGLAGCAV…LRALRHGHTG (401 aa)) is FAD-dependent cmnm(5)s(2)U34 oxidoreductase.

In the N-terminal section; belongs to the methyltransferase superfamily. tRNA (mnm(5)s(2)U34)-methyltransferase family. This sequence in the C-terminal section; belongs to the DAO family. The cofactor is FAD.

The protein resides in the cytoplasm. It catalyses the reaction 5-aminomethyl-2-thiouridine(34) in tRNA + S-adenosyl-L-methionine = 5-methylaminomethyl-2-thiouridine(34) in tRNA + S-adenosyl-L-homocysteine + H(+). Catalyzes the last two steps in the biosynthesis of 5-methylaminomethyl-2-thiouridine (mnm(5)s(2)U) at the wobble position (U34) in tRNA. Catalyzes the FAD-dependent demodification of cmnm(5)s(2)U34 to nm(5)s(2)U34, followed by the transfer of a methyl group from S-adenosyl-L-methionine to nm(5)s(2)U34, to form mnm(5)s(2)U34. The chain is tRNA 5-methylaminomethyl-2-thiouridine biosynthesis bifunctional protein MnmC from Cupriavidus necator (strain ATCC 17699 / DSM 428 / KCTC 22496 / NCIMB 10442 / H16 / Stanier 337) (Ralstonia eutropha).